The primary structure comprises 512 residues: 2-isopropylmalate synthase (512 aa).

Residues 4-266 enclose the Pyruvate carboxyltransferase domain; the sequence is IQFFDTTLRD…ETNIVLNQFK (263 aa). Residues D13, H201, H203, and N237 each coordinate Mn(2+). Residues 390 to 512 form a regulatory domain region; that stretch reads ELKHLQVQYV…SKQADFEEVK (123 aa).

The protein belongs to the alpha-IPM synthase/homocitrate synthase family. LeuA type 1 subfamily. As to quaternary structure, homodimer. It depends on Mn(2+) as a cofactor.

It is found in the cytoplasm. It carries out the reaction 3-methyl-2-oxobutanoate + acetyl-CoA + H2O = (2S)-2-isopropylmalate + CoA + H(+). Its pathway is amino-acid biosynthesis; L-leucine biosynthesis; L-leucine from 3-methyl-2-oxobutanoate: step 1/4. Its function is as follows. Catalyzes the condensation of the acetyl group of acetyl-CoA with 3-methyl-2-oxobutanoate (2-ketoisovalerate) to form 3-carboxy-3-hydroxy-4-methylpentanoate (2-isopropylmalate). This Listeria monocytogenes serotype 4b (strain CLIP80459) protein is 2-isopropylmalate synthase.